Here is an 82-residue protein sequence, read N- to C-terminus: Small ribosomal subunit protein bS16 (82 aa).

This sequence belongs to the bacterial ribosomal protein bS16 family.

The sequence is that of Small ribosomal subunit protein bS16 from Caldanaerobacter subterraneus subsp. tengcongensis (strain DSM 15242 / JCM 11007 / NBRC 100824 / MB4) (Thermoanaerobacter tengcongensis).